We begin with the raw amino-acid sequence, 332 residues long: Anthranilate phosphoribosyltransferase (332 aa).

Residues Gly79, 82–83 (GD), Ser87, 89–92 (NIST), 107–115 (KHGNRSVSS), and Ser119 each bind 5-phospho-alpha-D-ribose 1-diphosphate. An anthranilate-binding site is contributed by Gly79. Ser91 provides a ligand contact to Mg(2+). An anthranilate-binding site is contributed by Asn110. Arg165 provides a ligand contact to anthranilate. Mg(2+)-binding residues include Asp223 and Glu224.

It belongs to the anthranilate phosphoribosyltransferase family. In terms of assembly, homodimer. Mg(2+) is required as a cofactor.

The enzyme catalyses N-(5-phospho-beta-D-ribosyl)anthranilate + diphosphate = 5-phospho-alpha-D-ribose 1-diphosphate + anthranilate. It participates in amino-acid biosynthesis; L-tryptophan biosynthesis; L-tryptophan from chorismate: step 2/5. Catalyzes the transfer of the phosphoribosyl group of 5-phosphorylribose-1-pyrophosphate (PRPP) to anthranilate to yield N-(5'-phosphoribosyl)-anthranilate (PRA). This Photorhabdus laumondii subsp. laumondii (strain DSM 15139 / CIP 105565 / TT01) (Photorhabdus luminescens subsp. laumondii) protein is Anthranilate phosphoribosyltransferase.